Reading from the N-terminus, the 327-residue chain is MRLNDGRSFSCRSDQTVLHAALAAGIDMPYECASGSCGSCRCRLSHGSVSLLWPEAPGLSARDRQKGDRILACQSTPSSDLEINVRAGDALLEPPPRRHAARVTVKETLCASVIRLVLNVGGPIHFLPGQFFILDLPGAGRRAYSVANLENAAGGIELLIKRKIGGAGTAALFDQCAPGMGLVIEGPYGRAYLRADSARGIVAVAGGSGLAPMLSILRGALARGFGGPMDLYFGVNTAEELFCVPELSALQAAGARVHLALRDGGPGPAGLHRQAGLIGDALVAGEPDLKAKDLYVAGPAPMTDDILARTVRQEAIPADRVFFDRFV.

Residues 1-89 form the 2Fe-2S ferredoxin-type domain; the sequence is MRLNDGRSFS…DLEINVRAGD (89 aa). 4 residues coordinate [2Fe-2S] cluster: Cys-32, Cys-37, Cys-40, and Cys-73. The 99-residue stretch at 96 to 194 folds into the FAD-binding FR-type domain; that stretch reads PRRHAARVTV…EGPYGRAYLR (99 aa).

Belongs to the bacterial ring-hydroxylating dioxygenase ferredoxin reductase family. In terms of assembly, monomer. The alkene monooxygenase multicomponent enzyme system is composed of an electron transfer component and a monooxygenase component interacting with the effector protein XamoD. The electron transfer component is composed of a ferredoxin reductase (XamoF) and a ferredoxin (XamoC), and the monooxygenase component is formed by a heterohexamer (dimer of heterotrimers) of two alpha subunits (XamoA), two beta subunits (XamoE) and two gamma subunits (XamoB). Requires FAD as cofactor. [2Fe-2S] cluster is required as a cofactor.

Its subcellular location is the cytoplasm. It catalyses the reaction 2 reduced [2Fe-2S]-[ferredoxin] + NAD(+) + H(+) = 2 oxidized [2Fe-2S]-[ferredoxin] + NADH. In terms of biological role, reductase component of the alkene monooxygenase multicomponent enzyme system which catalyzes the O2- and NADH-dependent epoxidation of short chain (C2 to C6) alkenes to their corresponding epoxides. Ferredoxin reductase catalyzes the transfer of electrons from NADH to ferredoxin (XamoC). NADPH is also effective but with a rate approximately 3-fold lower than with NADH. This is Alkene monooxygenase system, ferredoxin--NAD(+) reductase component from Xanthobacter autotrophicus (strain ATCC BAA-1158 / Py2).